Reading from the N-terminus, the 252-residue chain is Uracil-DNA glycosylase (252 aa).

D87 functions as the Proton acceptor in the catalytic mechanism.

This sequence belongs to the uracil-DNA glycosylase (UDG) superfamily. UNG family.

The protein localises to the host nucleus. The enzyme catalyses Hydrolyzes single-stranded DNA or mismatched double-stranded DNA and polynucleotides, releasing free uracil.. In terms of biological role, excises uracil residues from the DNA which can arise as a result of misincorporation of dUMP residues by DNA polymerase or deamination of cytosines. Therefore may reduce deleterious uracil incorporation into the viral genome, particularly in terminally differentiated cells which lack DNA repair enzymes. The polypeptide is Uracil-DNA glycosylase (46) (Saimiri sciureus (Common squirrel monkey)).